Here is a 258-residue protein sequence, read N- to C-terminus: Small ribosomal subunit protein uS2 (258 aa).

The tract at residues 226-258 (AQNKDVEPVADKDEKPEAAPVDEAETATETTGE) is disordered. Basic and acidic residues predominate over residues 229–242 (KDVEPVADKDEKPE). Residues 245 to 258 (PVDEAETATETTGE) show a composition bias toward acidic residues.

The protein belongs to the universal ribosomal protein uS2 family.

This Solidesulfovibrio magneticus (strain ATCC 700980 / DSM 13731 / RS-1) (Desulfovibrio magneticus) protein is Small ribosomal subunit protein uS2.